Here is a 284-residue protein sequence, read N- to C-terminus: MRYTGLMGILLTLVNLLQLAATLRIAAFNIRTFGDTKMSNATLSSYIVKILSRYDIAVVQEVRDTHLVAVGKLLDELNRDIPDNYRYIISEPLGRKSYKEQYLFVYRPSQVSVLDSYHYDDGCEPCGNDTFSREPAIVKFFSPYTEVREFAIVPLHSAPTEAVSEIDALYDVYLDVRQKWGLEDIMFMGDFNAGCSYVTSSQWSSIRLRTSPIFQWLIPDSADTTATSTHCAYDRIVVAGALLQAAVVPSSAVPFDFQAEYRLTNQMAEAISDHYPVEVTLRKT.

Residues 1-22 (MRYTGLMGILLTLVNLLQLAAT) form the signal peptide. N40 is a glycosylation site (N-linked (GlcNAc...) asparagine). The active site involves E100. C123 and C126 form a disulfide bridge. N128 carries an N-linked (GlcNAc...) asparagine glycan. H156 is a catalytic residue. A disulfide bridge links C195 with C231.

Belongs to the DNase I family. The cofactor is Ca(2+). It depends on Mg(2+) as a cofactor.

It localises to the secreted. The protein resides in the zymogen granule. The protein localises to the nucleus envelope. The enzyme catalyses Endonucleolytic cleavage to 5'-phosphodinucleotide and 5'-phosphooligonucleotide end-products.. Functionally, serum endocuclease secreted into body fluids by a wide variety of exocrine and endocrine organs. Expressed by non-hematopoietic tissues and preferentially cleaves protein-free DNA. Among other functions, seems to be involved in cell death by apoptosis. Binds specifically to G-actin and blocks actin polymerization. Together with DNASE1L3, plays a key role in degrading neutrophil extracellular traps (NETs). NETs are mainly composed of DNA fibers and are released by neutrophils to bind pathogens during inflammation. Degradation of intravascular NETs by DNASE1 and DNASE1L3 is required to prevent formation of clots that obstruct blood vessels and cause organ damage following inflammation. The polypeptide is Deoxyribonuclease-1 (Dnase1) (Rattus norvegicus (Rat)).